The primary structure comprises 400 residues: Iron(III) enterobactin esterase (400 aa).

The protein belongs to the Fes family.

The protein resides in the cytoplasm. The enzyme catalyses Fe(III)-enterobactin + 3 H2O + H(+) = Fe(III)-[N-(2,3-dihydroxybenzoyl)-L-serine] + 2 N-(2,3-dihydroxybenzoyl)-L-serine. The catalysed reaction is Fe(III)-enterobactin + H2O = Fe(III)-[N-(2,3-dihydroxybenzoyl)-L-serine]3 + H(+). It catalyses the reaction Fe(III)-[N-(2,3-dihydroxybenzoyl)-L-serine]3 + H2O + H(+) = Fe(III)-[N-(2,3-dihydroxybenzoyl)-L-serine]2 + N-(2,3-dihydroxybenzoyl)-L-serine. It carries out the reaction Fe(III)-[N-(2,3-dihydroxybenzoyl)-L-serine]2 + H2O + H(+) = Fe(III)-[N-(2,3-dihydroxybenzoyl)-L-serine] + N-(2,3-dihydroxybenzoyl)-L-serine. The enzyme catalyses enterobactin + 3 H2O = 3 N-(2,3-dihydroxybenzoyl)-L-serine + 2 H(+). Functionally, catalyzes the hydrolysis of ferric enterobactin (Fe-Ent). Is responsible for the release of iron from ferric enterobactin. Also catalyzes the hydrolysis of iron-free enterobactin (Ent). Hydrolyzes ferric monoglucosyl-C-Ent (Fe-MGE) poorly and does not hydrolyze ferric diglucosyl-C-Ent (Fe-DGE) or ferric triglucosyl-C-Ent (Fe-TGE) at all. Also hydrolyzes apo MGE, but catalyzes the hydrolysis of apo DGE very poorly, and does not process apo TGE at all. The catalytic efficiency for processing Fe-Ent is much higher than that for apo Ent, suggesting that Fe-Ent is the physiological substrate. The chain is Iron(III) enterobactin esterase from Escherichia coli O6:H1 (strain CFT073 / ATCC 700928 / UPEC).